The following is a 1074-amino-acid chain: Transmembrane protein 132E (1074 aa).

The N-terminal stretch at 1–23 (MAPGMSGRRGAALLCLSVLLAHA) is a signal peptide. Residues 26-894 (RSHPASPSPP…LTDLEIGMYA (869 aa)) are Extracellular-facing. Asn-70 and Asn-91 each carry an N-linked (GlcNAc...) asparagine glycan. Disordered regions lie at residues 205-224 (PAAP…PEAA) and 243-266 (GGCG…ESPT). The span at 247-262 (SARRGPGPGPGAAARA) shows a compositional bias: low complexity. N-linked (GlcNAc...) asparagine glycosylation is found at Asn-320 and Asn-401. 2 disordered regions span residues 564 to 587 (RRSA…ANRG) and 816 to 867 (GRDE…PVPP). Over residues 843–854 (GAGPPGTAIPAG) the composition is skewed to low complexity. A helical transmembrane segment spans residues 895-915 (LLGVFCLAILVFLINCIVFVL). The Cytoplasmic portion of the chain corresponds to 916-1074 (RYRHKRIPPE…NYMRRIKDIA (159 aa)). The tract at residues 962–1064 (VPACCHGDHH…TRPTPPPDLH (103 aa)) is disordered. 2 stretches are compositionally biased toward low complexity: residues 973–985 (SGSS…SQVH) and 1016–1026 (FTTFTTLPTEE). The span at 1035–1044 (GEEEDEEEDL) shows a compositional bias: acidic residues.

The protein belongs to the TMEM132 family. Widely expressed, with highest levels in the cochlea. In the cochlea, detected in spiral ganglion, the organ of Corti and stria vascularis. In the organ of Corti, prominently expressed in the outer and inner hair cells, especially at the apical and basal region of the outer hair cell body (at protein level).

The protein resides in the membrane. In terms of biological role, required for normal inner ear hair cell function and hearing. The chain is Transmembrane protein 132E (Tmem132e) from Mus musculus (Mouse).